The following is a 553-amino-acid chain: CTP synthase (553 aa).

The tract at residues 1-277 (MPTEPETDYD…DQYVMEELDI (277 aa)) is amidoligase domain. CTP is bound at residue serine 26. A UTP-binding site is contributed by serine 26. ATP is bound by residues 27 to 32 (GLGKGI) and aspartate 84. The Mg(2+) site is built by aspartate 84 and glutamate 152. CTP-binding positions include 159–161 (DIE), 198–203 (KTKPTQ), and lysine 234. Residues 198-203 (KTKPTQ) and lysine 234 each bind UTP. Residues 307–544 (LVGKYDLEDA…LEAVLGDDPH (238 aa)) enclose the Glutamine amidotransferase type-1 domain. L-glutamine is bound at residue glycine 364. Cysteine 391 functions as the Nucleophile; for glutamine hydrolysis in the catalytic mechanism. L-glutamine contacts are provided by residues 392 to 395 (LGFQ), glutamate 415, and arginine 472. Active-site residues include histidine 517 and glutamate 519.

This sequence belongs to the CTP synthase family. In terms of assembly, homotetramer.

The catalysed reaction is UTP + L-glutamine + ATP + H2O = CTP + L-glutamate + ADP + phosphate + 2 H(+). It catalyses the reaction L-glutamine + H2O = L-glutamate + NH4(+). It carries out the reaction UTP + NH4(+) + ATP = CTP + ADP + phosphate + 2 H(+). It participates in pyrimidine metabolism; CTP biosynthesis via de novo pathway; CTP from UDP: step 2/2. Its activity is regulated as follows. Allosterically activated by GTP, when glutamine is the substrate; GTP has no effect on the reaction when ammonia is the substrate. The allosteric effector GTP functions by stabilizing the protein conformation that binds the tetrahedral intermediate(s) formed during glutamine hydrolysis. Inhibited by the product CTP, via allosteric rather than competitive inhibition. Catalyzes the ATP-dependent amination of UTP to CTP with either L-glutamine or ammonia as the source of nitrogen. Regulates intracellular CTP levels through interactions with the four ribonucleotide triphosphates. The polypeptide is CTP synthase (Haloarcula marismortui (strain ATCC 43049 / DSM 3752 / JCM 8966 / VKM B-1809) (Halobacterium marismortui)).